The following is a 530-amino-acid chain: MTRDFKPGDLIFAKMKGYPHWPARVDEVPDGAVKPPTNKLPIFFFGTHETAFLGPKDIFPYSENKEKYGKPNKRKGFNEGLWEIDNNPKVKFSSQQASAKQSNASSDVEVEEKETSVSKEDTDPEEKASNEDVTKAIDITTPKAARRGRKRKAEKQVETEEAGVVTTATASANLKVSPKRGRPAATEVKIPKPRGRPKMVKQPCPSESDMITEEDKSKKKGQEEKQPKKQLKKDEEGQKEEEKPRKEPDKKEGKKEVESKRKNLAKTGVTSTSDSEEEGDDQEGEKKRKGGRNFQTAHRRNMLKGQHEKEAADRKRKQEEQMETEQQNKDEGKKPEVKKVEKKRETSMDSRLQRIHAEIKNSLKIDNLDVNRCIEALDELASLQVTMQQAQKHTEMITTLKKIRRFKVSQVIMEKSTMLYNKFKNMFLVGEGDSVITQVLNKSLAEQRQHEEANKTKDQGKKGPNKKLEKEQTGSKTLNGGSDAQDSNQPQHNGDSNEESKDNHEASSKKKPSSEERETEISLKDSTLDN.

The PWWP domain maps to 1-64 (MTRDFKPGDL…PKDIFPYSEN (64 aa)). Lys-75 participates in a covalent cross-link: Glycyl lysine isopeptide (Lys-Gly) (interchain with G-Cter in SUMO2). The interval 88–349 (PKVKFSSQQA…VEKKRETSMD (262 aa)) is disordered. A compositionally biased stretch (low complexity) spans 93 to 107 (SSQQASAKQSNASSD). A phosphoserine mark is found at Ser-102, Ser-105, and Ser-106. The span at 113–135 (KETSVSKEDTDPEEKASNEDVTK) shows a compositional bias: basic and acidic residues. Phosphothreonine is present on residues Thr-115 and Thr-122. Ser-129 carries the phosphoserine modification. Thr-141 carries the phosphothreonine modification. Positions 144-153 (AARRGRKRKA) are enriched in basic residues. The short motif at 146–156 (RRGRKRKAEKQ) is the Nuclear localization signal element. Thr-167 is subject to Phosphothreonine. Phosphoserine is present on residues Ser-177 and Ser-206. Over residues 213-261 (EEDKSKKKGQEEKQPKKQLKKDEEGQKEEEKPRKEPDKKEGKKEVESKR) the composition is skewed to basic and acidic residues. Phosphoserine is present on Ser-271. A Phosphothreonine modification is found at Thr-272. Residues Ser-273 and Ser-275 each carry the phosphoserine modification. Residues 274-283 (DSEEEGDDQE) show a composition bias toward acidic residues. The segment covering 287 to 302 (KRKGGRNFQTAHRRNM) has biased composition (basic residues). Residues 305-349 (GQHEKEAADRKRKQEEQMETEQQNKDEGKKPEVKKVEKKRETSMD) are compositionally biased toward basic and acidic residues. 2 coiled-coil regions span residues 306–334 (QHEK…EGKK) and 371–395 (NRCI…KHTE). The integrase-binding domain (IBD) stretch occupies residues 340–417 (VEKKRETSMD…VSQVIMEKST (78 aa)). Ser-434 is modified (phosphoserine). Position 437 is a phosphothreonine (Thr-437). Ser-443 is subject to Phosphoserine. The span at 446–473 (EQRQHEEANKTKDQGKKGPNKKLEKEQT) shows a compositional bias: basic and acidic residues. The tract at residues 446–530 (EQRQHEEANK…ISLKDSTLDN (85 aa)) is disordered. Polar residues predominate over residues 474–494 (GSKTLNGGSDAQDSNQPQHNG). Basic and acidic residues predominate over residues 498–530 (EESKDNHEASSKKKPSSEERETEISLKDSTLDN). A Phosphoserine modification is found at Ser-514. At Arg-517 the chain carries Citrulline. Phosphoserine is present on Ser-522. Thr-527 carries the post-translational modification Phosphothreonine.

Belongs to the HDGF family. As to quaternary structure, monomer. Interacts with IFRD1/PC4. Interacts (via IBD domain) with POGZ (via IBM motif) and CDCA7L (via IBM motifs). Interacts (via IBD domain) with KMT2A (via IBM motifs) with a moderate affinity whereas interacts with the KMT2A-MEN1 complex with a greater affinity; MEN1 enhances interaction of KMT2A with PSIP1. Interacts (via IBD domain) with IWS1 (via IBM motif), MED1 (via IBM motif) and DBF4 (via IBM motifs). Post-translationally, citrullinated by PADI4.

The protein localises to the nucleus. In terms of biological role, transcriptional coactivator involved in neuroepithelial stem cell differentiation and neurogenesis. Involved in particular in lens epithelial cell gene regulation and stress responses. May play an important role in lens epithelial to fiber cell terminal differentiation. May play a protective role during stress-induced apoptosis. This Bos taurus (Bovine) protein is PC4 and SFRS1-interacting protein (PSIP1).